The chain runs to 941 residues: MEPAKPSGNNMGSNDERMQDYRPDPMMEESIKEILEESLMCDTSFDDLIIPGLESFGLIIPESSNNIESNNVEEGSDGELKTLAAQSAGNCIQSIGASVKAAMKQEQSDMEDKLIKCAGLLTQQQSMFIGLGLEQLSQLININLLSSASTKYVESYSKMLHGKELDFFNWCEPRFIVFACDKFDGLVKKVASESRNLLLDLRANMNNDIIKAVKDIFSKATVTLDCQKLNQGATMLMMMAHNKEMSNPDISSKDFCEKINTLKQTLLEGKNEIVETNAKNMQILQTFAIKQMNQIFMDGCDKAFLKLNVNCKNLITAAKNLANTILQSIVICSNEFSWQHLKLLRRGFKVTMLNMITQACECLESDYDDTGLIKPLTPLQIMDGYINMNKNRQSSICDGNTDPSDSMILDLADFDDHGRYSEESSIESIHEDDDNKMYPCTPSPEVPGKSKYVGTFTENSRQSGDEQTNPNCVGTASVTDLGGPDNLNSISGLQSCKNMLLERLLDTQCDSVVEGTEQDGSYGNTLISEMMMFGYETDHSAPYESESDNNDEIDYIANSDSAARTNNIHMNSTDENTPFSNSICSPPEVTPSKKNVKPKSMTPGSKPKKRVAKRKHVSSKSPKNKKIKTDQLPKAADVIVISSESEDEEDGDNIIGNSILIKAIKSESDSESSSESNDCTSEHKQLHLSDYDEVTNNGHCPSYGFPTPVFTIPIRSMQGTGGIKSKFIPKKNWIWYMKKTHQVDNCPIHNSENVDAKDDSDGTEAKHCFMNHFVPIKTDDEDYDKNNVSYIYNKIQNSKIDSGDIIPTKKLIIDMVMDNFMDLNDIIKQGITKHCQDLCNKYNVVTPTTCEDDLNMTNSQTFATTATQVFDPPVTGNNSSILNIINDTTSQNDENRCTEGTSNSNEKCTNISDCNSDGTEAFKLDGYPSDYDPFVENAQIY.

Disordered stretches follow at residues 1 to 23 and 567 to 632; these read MEPA…DYRP and NIHM…TDQL. A compositionally biased stretch (basic and acidic residues) spans 14–23; it reads NDERMQDYRP. Positions 567 to 584 are enriched in polar residues; the sequence is NIHMNSTDENTPFSNSIC. Basic residues predominate over residues 606–626; that stretch reads KPKKRVAKRKHVSSKSPKNKK.

The polypeptide is Immediate-early protein 1 (U90/U89) (Homo sapiens (Human)).